We begin with the raw amino-acid sequence, 138 residues long: MNTIHVDVVSAEESIFSGEARFVALPGEAGELGIYPRHTPLITRIKPGSVRIELPDGNEEFVFVAGGILEVQPDCVTVLSDTAIRGRDLDDQKAQEAKAAAEEALKNAKSEIDLARAQSELAVMAAQIAALRKFRQKR.

This sequence belongs to the ATPase epsilon chain family. In terms of assembly, F-type ATPases have 2 components, CF(1) - the catalytic core - and CF(0) - the membrane proton channel. CF(1) has five subunits: alpha(3), beta(3), gamma(1), delta(1), epsilon(1). CF(0) has three main subunits: a, b and c.

It is found in the cell inner membrane. Produces ATP from ADP in the presence of a proton gradient across the membrane. In Acidovorax ebreus (strain TPSY) (Diaphorobacter sp. (strain TPSY)), this protein is ATP synthase epsilon chain.